Here is a 336-residue protein sequence, read N- to C-terminus: Ribose-phosphate pyrophosphokinase 1 (336 aa).

D150, H152, D161, and D165 together coordinate Mg(2+). A binding of phosphoribosylpyrophosphate region spans residues 236-251; the sequence is GKVAVMVDDMIDTAGT.

It belongs to the ribose-phosphate pyrophosphokinase family.

The catalysed reaction is D-ribose 5-phosphate + ATP = 5-phospho-alpha-D-ribose 1-diphosphate + AMP + H(+). In Spinacia oleracea (Spinach), this protein is Ribose-phosphate pyrophosphokinase 1 (PRS1).